The chain runs to 1135 residues: Phytochrome C (1135 aa).

The span at 1 to 11 (MSSPLNNRGTC) shows a compositional bias: polar residues. The interval 1–26 (MSSPLNNRGTCSRSSSARSRHSARVV) is disordered. The GAF domain maps to 216-399 (NLSLLCDVLV…VFGIQLNKEV (184 aa)). C321 provides a ligand contact to phytochromobilin. 2 PAS domains span residues 618–688 (VTNE…LQGI) and 748–822 (IQGD…TKLS). Residues 902–1122 (YIHQELRNPL…IILIEFPVAQ (221 aa)) form the Histidine kinase domain.

The protein belongs to the phytochrome family. In terms of assembly, homodimer. Contains one covalently linked phytochromobilin chromophore.

Functionally, regulatory photoreceptor which exists in two forms that are reversibly interconvertible by light: the Pr form that absorbs maximally in the red region of the spectrum and the Pfr form that absorbs maximally in the far-red region. Photoconversion of Pr to Pfr induces an array of morphogenic responses, whereas reconversion of Pfr to Pr cancels the induction of those responses. Pfr controls the expression of a number of nuclear genes including those encoding the small subunit of ribulose-bisphosphate carboxylase, chlorophyll A/B binding protein, protochlorophyllide reductase, rRNA, etc. It also controls the expression of its own gene(s) in a negative feedback fashion. This Sorghum bicolor (Sorghum) protein is Phytochrome C (PHYC).